Consider the following 111-residue polypeptide: Photosystem II reaction center Psb28 protein (111 aa).

Belongs to the Psb28 family. In terms of assembly, part of the photosystem II complex.

Its subcellular location is the cellular thylakoid membrane. The protein is Photosystem II reaction center Psb28 protein of Crocosphaera subtropica (strain ATCC 51142 / BH68) (Cyanothece sp. (strain ATCC 51142)).